Reading from the N-terminus, the 645-residue chain is Aspartate--tRNA ligase, mitochondrial (645 aa).

The transit peptide at 1–47 (MYFPSWLSQLYRGLSRPIRRTTQPIWGSLYRSLLQSSQRRIPEFSSF) directs the protein to the mitochondrion. T219 is subject to Phosphothreonine. S242 carries the post-translational modification Phosphoserine. The tract at residues 244-247 (QQFK) is aspartate. R266 contacts L-aspartate. 266–268 (RDE) contacts ATP. K382 is modified (N6-acetyllysine). E535 is a binding site for ATP. L-aspartate is bound at residue R542. 584-587 (GLDR) provides a ligand contact to ATP.

Belongs to the class-II aminoacyl-tRNA synthetase family. Type 1 subfamily. As to quaternary structure, homodimer.

The protein localises to the mitochondrion matrix. It is found in the mitochondrion membrane. It carries out the reaction tRNA(Asp) + L-aspartate + ATP = L-aspartyl-tRNA(Asp) + AMP + diphosphate. Catalyzes the attachment of aspartate to tRNA(Asp) in a two-step reaction: aspartate is first activated by ATP to form Asp-AMP and then transferred to the acceptor end of tRNA(Asp). The chain is Aspartate--tRNA ligase, mitochondrial (DARS2) from Homo sapiens (Human).